Here is a 512-residue protein sequence, read N- to C-terminus: FACT complex subunit pob3 (512 aa).

Positions 460–504 (LDDEDEEGDEEMEEALSEDEDFQAESESDVAEEYDENAESSDEEG) are enriched in acidic residues. The segment at 460–512 (LDDEDEEGDEEMEEALSEDEDFQAESESDVAEEYDENAESSDEEGASGAEGSE) is disordered.

It belongs to the SSRP1 family. In terms of assembly, forms a stable heterodimer with spt16. The spt16-pob3 dimer weakly associates with multiple molecules of nhp6 to form the FACT complex. Interacts with abo1.

It is found in the nucleus. Its subcellular location is the chromosome. Its function is as follows. Component of the FACT complex, a general chromatin factor that acts to reorganize nucleosomes. The FACT complex is involved in multiple processes that require DNA as a template such as mRNA elongation, DNA replication and DNA repair. During transcription elongation the FACT complex acts as a histone chaperone that both destabilizes and restores nucleosomal structure. It facilitates the passage of RNA polymerase II and transcription by promoting the dissociation of one histone H2A-H2B dimer from the nucleosome, then subsequently promotes the reestablishment of the nucleosome following the passage of RNA polymerase II. This chain is FACT complex subunit pob3, found in Schizosaccharomyces pombe (strain 972 / ATCC 24843) (Fission yeast).